Reading from the N-terminus, the 525-residue chain is GMP synthase [glutamine-hydrolyzing] (525 aa).

The Glutamine amidotransferase type-1 domain maps to 9–207; sequence RILILDFGSQ…VRDICQCEAL (199 aa). The active-site Nucleophile is Cys86. Residues His181 and Glu183 contribute to the active site. One can recognise a GMPS ATP-PPase domain in the interval 208–400; that stretch reads WTPAKIIDDA…LGLPYDMLYR (193 aa). ATP is bound at residue 235-241; the sequence is SGGVDSS.

As to quaternary structure, homodimer.

The enzyme catalyses XMP + L-glutamine + ATP + H2O = GMP + L-glutamate + AMP + diphosphate + 2 H(+). The protein operates within purine metabolism; GMP biosynthesis; GMP from XMP (L-Gln route): step 1/1. In terms of biological role, catalyzes the synthesis of GMP from XMP. The sequence is that of GMP synthase [glutamine-hydrolyzing] from Klebsiella pneumoniae subsp. pneumoniae (strain ATCC 700721 / MGH 78578).